The chain runs to 332 residues: tRNA U34 carboxymethyltransferase (332 aa).

Residues K91, W105, K110, G130, D152–S154, I181–E182, M196, Y200, and R315 contribute to the carboxy-S-adenosyl-L-methionine site.

It belongs to the class I-like SAM-binding methyltransferase superfamily. CmoB family. In terms of assembly, homotetramer.

The enzyme catalyses carboxy-S-adenosyl-L-methionine + 5-hydroxyuridine(34) in tRNA = 5-carboxymethoxyuridine(34) in tRNA + S-adenosyl-L-homocysteine + H(+). In terms of biological role, catalyzes carboxymethyl transfer from carboxy-S-adenosyl-L-methionine (Cx-SAM) to 5-hydroxyuridine (ho5U) to form 5-carboxymethoxyuridine (cmo5U) at position 34 in tRNAs. This chain is tRNA U34 carboxymethyltransferase, found in Shewanella sp. (strain W3-18-1).